The chain runs to 376 residues: MLDPARLDNPAVIFDNGSGLCKVGISGEIEPRHVINSVVGHPKFNIPSARSNRKRYFVGEEAQCMYDGLYLHYPIERGLVTRWDDMEKLWKDLFEWELGVKPNEQPVFMTEPSLNPQETREKTTEIMFEKFNVPALYLCNHAVGALCASACITGLVLDSGDGVTCTVPVYEGYSLPHAITKLYVAGRDITEHLTRLLLAKGYTFPCILNKAVVDDIKEKLCTVSLGYKDTEKNCQQFLRKYTLPDGNTIQMSDHLCQVPEVLFTPDHLGIHDLGISKMVCNSIMNCDTDIQENLFAEIVLSGGTTMFPGLQDRLLKELEDLAFEGTPIKITASSDRCYSAWIGGSVMTSMTTFKQMWVTAEDFKEYGAFVVQRKCF.

This sequence belongs to the actin family.

The protein localises to the cytoplasm. Its subcellular location is the cytoskeleton. The protein resides in the nucleus. It is found in the cytoplasmic vesicle. It localises to the secretory vesicle. The protein localises to the acrosome. Functionally, negatively regulates the Hedgehog (SHH) signaling. Binds to the promoter of the SHH signaling mediator, GLI1, and inhibits its expression. This is Actin-related protein T1 (Actrt1) from Mus musculus (Mouse).